A 340-amino-acid polypeptide reads, in one-letter code: UDP-N-acetylglucosamine--N-acetylmuramyl-(pentapeptide) pyrophosphoryl-undecaprenol N-acetylglucosamine transferase (340 aa).

UDP-N-acetyl-alpha-D-glucosamine-binding positions include 10 to 12 (TGG), Asn-110, Ser-171, and Gln-272.

This sequence belongs to the glycosyltransferase 28 family. MurG subfamily.

It localises to the cell membrane. The catalysed reaction is di-trans,octa-cis-undecaprenyl diphospho-N-acetyl-alpha-D-muramoyl-L-alanyl-D-glutamyl-meso-2,6-diaminopimeloyl-D-alanyl-D-alanine + UDP-N-acetyl-alpha-D-glucosamine = di-trans,octa-cis-undecaprenyl diphospho-[N-acetyl-alpha-D-glucosaminyl-(1-&gt;4)]-N-acetyl-alpha-D-muramoyl-L-alanyl-D-glutamyl-meso-2,6-diaminopimeloyl-D-alanyl-D-alanine + UDP + H(+). Its pathway is cell wall biogenesis; peptidoglycan biosynthesis. In terms of biological role, cell wall formation. Catalyzes the transfer of a GlcNAc subunit on undecaprenyl-pyrophosphoryl-MurNAc-pentapeptide (lipid intermediate I) to form undecaprenyl-pyrophosphoryl-MurNAc-(pentapeptide)GlcNAc (lipid intermediate II). This chain is UDP-N-acetylglucosamine--N-acetylmuramyl-(pentapeptide) pyrophosphoryl-undecaprenol N-acetylglucosamine transferase, found in Wolbachia pipientis subsp. Culex pipiens (strain wPip).